Consider the following 267-residue polypeptide: Transcription factor HES-1 (267 aa).

The interval 1–45 (MPADLMEKNSSSPVAATPASMSNTPDKPKTASEHRKSSKPIMEKR) is disordered. Residues 8 to 25 (KNSSSPVAATPASMSNTP) are compositionally biased toward polar residues. Residues 26-35 (DKPKTASEHR) show a composition bias toward basic and acidic residues. The bHLH domain maps to 34–91 (HRKSSKPIMEKRRRARINESLGQLKTLILDALKKDSSRHSKLEKADILEMTVKHLRNL). The region spanning 110–143 (YRAGFSECMNEVTRFLSTCEGVNTDVRTRLLGHL) is the Orange domain. The WRPW motif signature appears at 264–267 (WRPW).

In terms of assembly, transcription repression requires formation of a complex with a corepressor protein of the Groucho/TLE family. Interacts with the bHLH protein hes2, and binds DNA in the form of a heterodimer with the bHLH protein hey1/hrt1. Interacts with the bHLH protein hes6; this interaction may inhibit the transcriptional repressor activity.

Its subcellular location is the nucleus. Transcriptional repressor of a subset of early mesodermal genes including myod1 and t/bra. Binds DNA on N-box motifs: 5'-CACNAG-3'. Acts as a negative regulator of myogenesis, mediating Notch signaling to repress expression of myod1. The sequence is that of Transcription factor HES-1 from Xenopus tropicalis (Western clawed frog).